The sequence spans 467 residues: Stromal membrane-associated protein 1 (467 aa).

In terms of domain architecture, Arf-GAP spans 18 to 136; it reads QLILSKLLRE…KYYDKNAIAI (119 aa). Residues 33-56 form a C4-type zinc finger; sequence CADCEAKGPRWASWNIGVFICIRC. A compositionally biased stretch (polar residues) spans 145–155; sequence PLQPLVSSPSL. Disordered regions lie at residues 145–224 and 408–467; these read PLQP…LDGP and KFGL…QLWK. Composition is skewed to basic and acidic residues over residues 160–185 and 192–204; these read DKNK…EKPA and KLQK…EPKK. An Interaction with clathrin heavy chains motif is present at residues 218–222; sequence LLGLD. Over residues 413–438 the composition is skewed to polar residues; sequence QAQQPQWSLSQMNQQMAGMSISSATP. Residues 446-467 show a composition bias toward low complexity; it reads SSTTAGWSGSSSGQTLSTQLWK.

Interacts with ARF6. Interacts with clathrin heavy chains via the clathrin box-like motif. Detected in bone marrow, adrenal gland, trachea, lymph node, spinal cord, peripheral blood leukocytes, thyroid and stomach.

Its subcellular location is the cell membrane. Its function is as follows. GTPase activating protein that acts on ARF6. Plays a role in clathrin-dependent endocytosis. May play a role in erythropoiesis. In Homo sapiens (Human), this protein is Stromal membrane-associated protein 1 (SMAP1).